Consider the following 283-residue polypeptide: HTH-type transcriptional activator RhaR (283 aa).

An HTH araC/xylS-type domain is found at Asp-179 to Gln-277. 2 consecutive DNA-binding regions (H-T-H motif) follow at residues Gln-196 to Thr-217 and Ile-244 to Thr-267.

As to quaternary structure, binds DNA as a dimer.

The protein localises to the cytoplasm. Functionally, activates expression of the rhaSR operon in response to L-rhamnose. The polypeptide is HTH-type transcriptional activator RhaR (Cronobacter sakazakii (strain ATCC BAA-894) (Enterobacter sakazakii)).